The chain runs to 217 residues: FMN-dependent NADH:quinone oxidoreductase (217 aa).

FMN-binding positions include serine 10, 17 to 19, and 137 to 140; these read SAS and SRGG.

The protein belongs to the azoreductase type 1 family. In terms of assembly, homodimer. The cofactor is FMN.

It carries out the reaction 2 a quinone + NADH + H(+) = 2 a 1,4-benzosemiquinone + NAD(+). The catalysed reaction is N,N-dimethyl-1,4-phenylenediamine + anthranilate + 2 NAD(+) = 2-(4-dimethylaminophenyl)diazenylbenzoate + 2 NADH + 2 H(+). Quinone reductase that provides resistance to thiol-specific stress caused by electrophilic quinones. In terms of biological role, also exhibits azoreductase activity. Catalyzes the reductive cleavage of the azo bond in aromatic azo compounds to the corresponding amines. The protein is FMN-dependent NADH:quinone oxidoreductase of Streptomyces avermitilis (strain ATCC 31267 / DSM 46492 / JCM 5070 / NBRC 14893 / NCIMB 12804 / NRRL 8165 / MA-4680).